The primary structure comprises 415 residues: Putative glutamate--cysteine ligase 2 (415 aa).

The protein belongs to the glutamate--cysteine ligase type 2 family. YbdK subfamily.

It catalyses the reaction L-cysteine + L-glutamate + ATP = gamma-L-glutamyl-L-cysteine + ADP + phosphate + H(+). ATP-dependent carboxylate-amine ligase which exhibits weak glutamate--cysteine ligase activity. The protein is Putative glutamate--cysteine ligase 2 of Bordetella petrii (strain ATCC BAA-461 / DSM 12804 / CCUG 43448).